Here is a 923-residue protein sequence, read N- to C-terminus: Calmodulin-binding transcription activator 5 (923 aa).

The CG-1 DNA-binding region spans Ile-25–Ala-151. The interval Val-272 to Val-372 is transcription activation. The ANK repeat unit spans residues Gln-611–Leu-640. IQ domains are found at residues Asn-757–Arg-786, Met-799–Val-828, and Leu-875–Glu-904. The tract at residues Trp-824–Leu-846 is calmodulin-binding. Residues Arg-887–Glu-914 adopt a coiled-coil conformation.

Belongs to the CAMTA family. Expressed in roots, stems, leaves, pollen, top of sepals and siliques.

It is found in the nucleus. In terms of biological role, transcription activator. Binds to the DNA consensus sequence 5'-[ACG]CGCG[GTC]-3'. Regulates transcriptional activity in response to calcium signals. Binds calmodulin in a calcium-dependent manner. Involved in response to cold. Contributes together with CAMTA3 to the positive regulation of the cold-induced expression of DREB1A/CBF3, DREB1B/CBF1 and DREB1C/CBF2. This chain is Calmodulin-binding transcription activator 5, found in Arabidopsis thaliana (Mouse-ear cress).